The following is a 204-amino-acid chain: Large ribosomal subunit protein eL15z (204 aa).

Positions leucine 161 to arginine 204 are disordered. Residues asparagine 171–tryptophan 192 are compositionally biased toward basic residues. Over residues lysine 193 to arginine 204 the composition is skewed to polar residues.

The protein belongs to the eukaryotic ribosomal protein eL15 family.

The protein is Large ribosomal subunit protein eL15z (RPL15A) of Arabidopsis thaliana (Mouse-ear cress).